We begin with the raw amino-acid sequence, 1236 residues long: DNA-directed RNA polymerase subunit beta (1236 aa).

Residues 1193-1212 (PDVLDDDSYDQNNDEDIDEI) are disordered. Acidic residues predominate over residues 1194–1212 (DVLDDDSYDQNNDEDIDEI).

It belongs to the RNA polymerase beta chain family. As to quaternary structure, the RNAP catalytic core consists of 2 alpha, 1 beta, 1 beta' and 1 omega subunit. When a sigma factor is associated with the core the holoenzyme is formed, which can initiate transcription.

The catalysed reaction is RNA(n) + a ribonucleoside 5'-triphosphate = RNA(n+1) + diphosphate. Its function is as follows. DNA-dependent RNA polymerase catalyzes the transcription of DNA into RNA using the four ribonucleoside triphosphates as substrates. The sequence is that of DNA-directed RNA polymerase subunit beta from Clostridium beijerinckii (strain ATCC 51743 / NCIMB 8052) (Clostridium acetobutylicum).